The following is a 471-amino-acid chain: 3-isopropylmalate dehydratase large subunit (471 aa).

[4Fe-4S] cluster-binding residues include cysteine 347, cysteine 409, and cysteine 412.

Belongs to the aconitase/IPM isomerase family. LeuC type 1 subfamily. As to quaternary structure, heterodimer of LeuC and LeuD. The cofactor is [4Fe-4S] cluster.

The catalysed reaction is (2R,3S)-3-isopropylmalate = (2S)-2-isopropylmalate. It participates in amino-acid biosynthesis; L-leucine biosynthesis; L-leucine from 3-methyl-2-oxobutanoate: step 2/4. In terms of biological role, catalyzes the isomerization between 2-isopropylmalate and 3-isopropylmalate, via the formation of 2-isopropylmaleate. The sequence is that of 3-isopropylmalate dehydratase large subunit from Buchnera aphidicola subsp. Rhopalosiphum padi.